The primary structure comprises 1154 residues: Large proline-rich protein BAG6 (1154 aa).

Met1 bears the N-acetylmethionine mark. A Ubiquitin-like domain is found at 17–92; that stretch reads LEVLVKTLDS…HLVERAPPQT (76 aa). Disordered stretches follow at residues 87–125, 186–274, 387–442, 463–531, and 568–626; these read RAPP…ASVH, RGGT…HPSP, TMTG…SSHP, QDSG…QGAG, and AQAQ…SAAD. Ser96 carries the post-translational modification Phosphoserine. Residues 96–112 show a composition bias toward low complexity; that stretch reads SGASSGTGSASATHGGA. Thr117 carries the phosphothreonine modification. Over residues 209 to 218 the composition is skewed to polar residues; sequence VALNSQTSEP. Copy 1 of the repeat occupies 237–271; that stretch reads RPPTQTPELAPSGPAPAGPAPAGPAPAPETNAPNH. The tract at residues 237–658 is 4 X 29 AA approximate repeats; it reads RPPTQTPELA…MASPTITVAM (422 aa). Over residues 249–263 the composition is skewed to pro residues; sequence GPAPAGPAPAGPAPA. Low complexity predominate over residues 400–409; the sequence is GAEAATPGSA. Polar residues predominate over residues 410–426; that stretch reads QATSLPPSSTTVDSSTE. Copy 2 of the repeat occupies 416 to 444; it reads PSSTTVDSSTEGAPPPGPAPPPASSHPRV. Composition is skewed to pro residues over residues 428-439 and 508-521; these read APPPGPAPPPAS and PTPP…PGGP. Composition is skewed to low complexity over residues 568–581 and 591–609; these read AQAQ…AQAP and PATA…TAGP. 2 tandem repeats follow at residues 597–624 and 630–658. Over residues 611 to 622 the composition is skewed to pro residues; sequence PGGPAQPPPPQP. 2 disordered regions span residues 673-719 and 968-1154; these read QASQ…ESLP and PPQT…ADDP. The span at 678 to 702 shows a compositional bias: pro residues; that stretch reads APPPPPPPPPPPPAPEQQSTPPPGS. Ser986 and Ser995 each carry phosphoserine. Low complexity predominate over residues 1029 to 1042; it reads AEPWAAAVPPEWVP. A required for interaction with GET4 region spans residues 1032–1062; the sequence is WAAAVPPEWVPIIQQDIQSQRKVKPQPPLSD. Residues 1034 to 1076 carry the Nuclear localization site motif; sequence AAVPPEWVPIIQQDIQSQRKVKPQPPLSDAYLSGMPAKRRKTM. Residues 1044 to 1154 are sufficient for the delivery of client proteins to the endoplasmic reticulum; that stretch reads IQQDIQSQRK…NAHRAFADDP (111 aa). Thr1075 bears the Phosphothreonine mark. The tract at residues 1080–1137 is BAG-similar domain, required and sufficient for interaction with UBL4A; it reads GPQLLLSEAVSRAAKAAGARPLTSPESLSRDLEAPEVQESYRQQLRSDIQKRLQEDPN. Over residues 1088-1098 the composition is skewed to low complexity; it reads AVSRAAKAAGA. A phosphoserine mark is found at Ser1103 and Ser1139.

As to quaternary structure, component of the BAG6/BAT3 complex, also named BAT3 complex, at least composed of BAG6, UBL4A and GET4/TRC35. Interacts with GET4; the interaction is direct and localizes BAG6 in the cytosol. Interacts with UBL4A; the interaction is direct and required for UBL4A protein stability. Interacts with AIFM1. Interacts with HSPA2. Interacts with CTCFL. Interacts with p300/EP300. Interacts (via ubiquitin-like domain) with RNF126; required for BAG6-dependent ubiquitination of proteins mislocalized to the cytosol. Interacts (via ubiquitin-like domain) with SGTA; SGTA competes with RNF126 by binding the same region of BAG6, thereby promoting deubiquitination of BAG6-target proteins and rescuing them from degradation. Interacts with ricin A chain. Interacts with VCP and AMFR; both form the VCP/p97-AMFR/gp78 complex. Interacts with SYVN1. Interacts with USP13; the interaction is direct and may mediate UBL4A deubiquitination. Interacts with ZFAND2B. Interacts with KPNA2. Interacts with UBQLN4. Post-translationally, ricin can induce a cleavage by the caspase CASP3. The released C-terminal peptide induces apoptosis.

Its subcellular location is the cytoplasm. The protein resides in the cytosol. It is found in the nucleus. It localises to the secreted. The protein localises to the extracellular exosome. Functionally, ATP-independent molecular chaperone preventing the aggregation of misfolded and hydrophobic patches-containing proteins. Functions as part of a cytosolic protein quality control complex, the BAG6/BAT3 complex, which maintains these client proteins in a soluble state and participates in their proper delivery to the endoplasmic reticulum or alternatively can promote their sorting to the proteasome where they undergo degradation. The BAG6/BAT3 complex is involved in the post-translational delivery of tail-anchored/type II transmembrane proteins to the endoplasmic reticulum membrane. Recruited to ribosomes, it interacts with the transmembrane region of newly synthesized tail-anchored proteins and together with SGTA and ASNA1 mediates their delivery to the endoplasmic reticulum. Client proteins that cannot be properly delivered to the endoplasmic reticulum are ubiquitinated by RNF126, an E3 ubiquitin-protein ligase associated with BAG6 and are sorted to the proteasome. SGTA which prevents the recruitment of RNF126 to BAG6 may negatively regulate the ubiquitination and the proteasomal degradation of client proteins. Similarly, the BAG6/BAT3 complex also functions as a sorting platform for proteins of the secretory pathway that are mislocalized to the cytosol either delivering them to the proteasome for degradation or to the endoplasmic reticulum. The BAG6/BAT3 complex also plays a role in the endoplasmic reticulum-associated degradation (ERAD), a quality control mechanism that eliminates unwanted proteins of the endoplasmic reticulum through their retrotranslocation to the cytosol and their targeting to the proteasome. It maintains these retrotranslocated proteins in an unfolded yet soluble state condition in the cytosol to ensure their proper delivery to the proteasome. BAG6 is also required for selective ubiquitin-mediated degradation of defective nascent chain polypeptides by the proteasome. In this context, it may participate in the production of antigenic peptides and play a role in antigen presentation in immune response. BAG6 is also involved in endoplasmic reticulum stress-induced pre-emptive quality control, a mechanism that selectively attenuates the translocation of newly synthesized proteins into the endoplasmic reticulum and reroutes them to the cytosol for proteasomal degradation. BAG6 may ensure the proper degradation of these proteins and thereby protects the endoplasmic reticulum from protein overload upon stress. By inhibiting the polyubiquitination and subsequent proteasomal degradation of HSPA2 it may also play a role in the assembly of the synaptonemal complex during spermatogenesis. Also positively regulates apoptosis by interacting with and stabilizing the proapoptotic factor AIFM1. By controlling the steady-state expression of the IGF1R receptor, indirectly regulates the insulin-like growth factor receptor signaling pathway. In terms of biological role, involved in DNA damage-induced apoptosis: following DNA damage, accumulates in the nucleus and forms a complex with p300/EP300, enhancing p300/EP300-mediated p53/TP53 acetylation leading to increase p53/TP53 transcriptional activity. When nuclear, may also act as a component of some chromatin regulator complex that regulates histone 3 'Lys-4' dimethylation (H3K4me2). Released extracellularly via exosomes, it is a ligand of the natural killer/NK cells receptor NCR3 and stimulates NK cells cytotoxicity. It may thereby trigger NK cells cytotoxicity against neighboring tumor cells and immature myeloid dendritic cells (DC). Its function is as follows. May mediate ricin-induced apoptosis. The chain is Large proline-rich protein BAG6 from Mus musculus (Mouse).